Consider the following 567-residue polypeptide: Zinc finger protein 512 (567 aa).

The interval 1 to 32 (MSSRLGAVPATSGPTTFKQQRSTRIVGAKNSR) is disordered. Residues 12–23 (SGPTTFKQQRST) show a composition bias toward polar residues. Residues Lys-18 and Lys-84 each participate in a glycyl lysine isopeptide (Lys-Gly) (interchain with G-Cter in SUMO2) cross-link. The tract at residues 86 to 148 (AATSHVEGSG…QARRIRKEPP (63 aa)) is disordered. The segment covering 119–130 (KKHKLYGRKQRP) has biased composition (basic residues). The C2H2-type 1 zinc-finger motif lies at 197–220 (FTCHHCGKQLRSLAGMKYHVMANH). Lys-227 is covalently cross-linked (Glycyl lysine isopeptide (Lys-Gly) (interchain with G-Cter in SUMO2)). A C2H2-type 2 zinc finger spans residues 287–310 (LKCHHCGKPYRSKAGLAYHLRSEH). Lys-333 is covalently cross-linked (Glycyl lysine isopeptide (Lys-Gly) (interchain with G-Cter in SUMO2)). The C2H2-type 3; atypical zinc-finger motif lies at 406 to 430 (IQCPNQGCEAVYSSVSGLKAHLGSC). The C2H2-type 4 zinc finger occupies 440–463 (YKCLLCQKEFVSESGVKYHINSVH). Residues 486–567 (QRQQEEEKRR…PKTNHKRGRK (82 aa)) are disordered. Positions 495 to 508 (RQQHRSRRSLRRRQ) are enriched in basic residues. Over residues 523-532 (VGKDQRRNNE) the composition is skewed to basic and acidic residues. Positions 556-567 (KPPKTNHKRGRK) are enriched in basic residues.

The protein belongs to the krueppel C2H2-type zinc-finger protein family.

The protein localises to the nucleus. May be involved in transcriptional regulation. The sequence is that of Zinc finger protein 512 (ZNF512) from Homo sapiens (Human).